A 363-amino-acid polypeptide reads, in one-letter code: Putative type I specificity subunit S.MpnORF507P (363 aa).

The protein belongs to the type-I restriction system S methylase family. As to quaternary structure, the methyltransferase is composed of M and S polypeptides.

Functionally, the specificity (S) subunit of a type I methyltransferase (MTase); this subunit dictates DNA sequence specificity. The single R subunit has multiple frameshifts and is probably not expressed. The chain is Putative type I specificity subunit S.MpnORF507P from Mycoplasma pneumoniae (strain ATCC 29342 / M129 / Subtype 1) (Mycoplasmoides pneumoniae).